The primary structure comprises 518 residues: Sugar transport protein MST3 (518 aa).

At 1–18 (MAGGAVVSTGAGKDYPGK) the chain is on the cytoplasmic side. Residues 19-39 (LTLFVFFTCVVAATGGLIFGY) traverse the membrane as a helical segment. Residues 40-80 (DIGISGGVTSMDPFLRKFFPEVYRKKQMADKNNQYCKYDNQ) lie on the Extracellular side of the membrane. A helical membrane pass occupies residues 81-101 (LLQTFTSSLYLAALVSSFFAA). Over 102–117 (TVTRVLGRKWSMFAGG) the chain is Cytoplasmic. Residues 118 to 138 (LTFLIGAALNGAAENVAMLIV) form a helical membrane-spanning segment. Over 139 to 140 (GR) the chain is Extracellular. A helical membrane pass occupies residues 141 to 161 (ILLGVGVGFANQSVPVYLSEM). At 162-167 (APARLR) the chain is on the cytoplasmic side. Residues 168 to 188 (GMLNIGFQLMITIGILAAELI) form a helical membrane-spanning segment. Residues 189–202 (NYGTAKIKAGWGWR) are Extracellular-facing. The chain crosses the membrane as a helical span at residues 203–223 (VSLALAAVPAAIITLGSLFLP). At 224–290 (DTPNSLIDRG…YRAQLTMAIC (67 aa)) the chain is on the cytoplasmic side. A helical transmembrane segment spans residues 291 to 311 (IPFFQQLTGINVIMFYAPVLF). Residues 312 to 322 (DTLGFKSDASL) lie on the Extracellular side of the membrane. The helical transmembrane segment at 323 to 343 (MSAVITGLVNVFATLVSIFTV) threads the bilayer. Residues 344–351 (DRLGRRKL) lie on the Cytoplasmic side of the membrane. The helical transmembrane segment at 352–372 (FLQGGAQMVVCQVVVGTLIAV) threads the bilayer. The Extracellular portion of the chain corresponds to 373–387 (KFGTSGIGDIPKGYA). Residues 388 to 408 (AVVVLFICMYVAGFAWSWGPL) form a helical membrane-spanning segment. Over 409–427 (GWLVPSEIFPLEIRPAGQS) the chain is Cytoplasmic. Residues 428–448 (INVSVNMLFTFVIAQAFLTML) traverse the membrane as a helical segment. The Extracellular portion of the chain corresponds to 449–452 (CHMK). The helical transmembrane segment at 453 to 473 (FGLFYFFAGWVVIMTVFIALF) threads the bilayer. At 474 to 518 (LPETKNVPIEEMVLVWKSHWFWRRFIGDHDVHVGANHVSNNKLQP) the chain is on the cytoplasmic side.

This sequence belongs to the major facilitator superfamily. Sugar transporter (TC 2.A.1.1) family. In terms of tissue distribution, highly expressed in roots. Expressed in xylem and sclerenchyma cells of roots. Expressed at low levels in leaves.

Its subcellular location is the membrane. In terms of biological role, mediates active uptake of hexoses by sugar:proton symport. Can transport glucose, xylose and 3-O-methylglucose. May be involved in the accumulation of monosaccharides required for cell wall synthesis during root development. The sequence is that of Sugar transport protein MST3 from Oryza sativa subsp. japonica (Rice).